The chain runs to 635 residues: 1-deoxy-D-xylulose-5-phosphate synthase (635 aa).

Thiamine diphosphate-binding positions include H78 and 119-121 (GHS). D151 lines the Mg(2+) pocket. Thiamine diphosphate-binding positions include 152-153 (GA), N180, Y289, and E371. Residue N180 coordinates Mg(2+).

The protein belongs to the transketolase family. DXPS subfamily. Homodimer. Requires Mg(2+) as cofactor. The cofactor is thiamine diphosphate.

The enzyme catalyses D-glyceraldehyde 3-phosphate + pyruvate + H(+) = 1-deoxy-D-xylulose 5-phosphate + CO2. It participates in metabolic intermediate biosynthesis; 1-deoxy-D-xylulose 5-phosphate biosynthesis; 1-deoxy-D-xylulose 5-phosphate from D-glyceraldehyde 3-phosphate and pyruvate: step 1/1. Functionally, catalyzes the acyloin condensation reaction between C atoms 2 and 3 of pyruvate and glyceraldehyde 3-phosphate to yield 1-deoxy-D-xylulose-5-phosphate (DXP). The chain is 1-deoxy-D-xylulose-5-phosphate synthase from Bartonella tribocorum (strain CIP 105476 / IBS 506).